Here is a 443-residue protein sequence, read N- to C-terminus: Ribosomal protein uS12 methylthiotransferase RimO (443 aa).

The MTTase N-terminal domain occupies 8-118 (PKVGFVSLGC…VVNAVHEVVP (111 aa)). Cysteine 17, cysteine 53, cysteine 82, cysteine 151, cysteine 155, and cysteine 158 together coordinate [4Fe-4S] cluster. Residues 137-376 (LTPRHYAYLK…AHQQAISSAR (240 aa)) enclose the Radical SAM core domain. A TRAM domain is found at 378-443 (QLRIGKEIEV…DEYDMWAEPV (66 aa)).

Belongs to the methylthiotransferase family. RimO subfamily. The cofactor is [4Fe-4S] cluster.

Its subcellular location is the cytoplasm. The catalysed reaction is L-aspartate(89)-[ribosomal protein uS12]-hydrogen + (sulfur carrier)-SH + AH2 + 2 S-adenosyl-L-methionine = 3-methylsulfanyl-L-aspartate(89)-[ribosomal protein uS12]-hydrogen + (sulfur carrier)-H + 5'-deoxyadenosine + L-methionine + A + S-adenosyl-L-homocysteine + 2 H(+). Functionally, catalyzes the methylthiolation of an aspartic acid residue of ribosomal protein uS12. In Pseudomonas putida (strain W619), this protein is Ribosomal protein uS12 methylthiotransferase RimO.